A 239-amino-acid polypeptide reads, in one-letter code: Endonuclease V (239 aa).

Residues Asp-50 and Asp-118 each contribute to the Mg(2+) site.

Belongs to the endonuclease V family. Requires Mg(2+) as cofactor.

The protein resides in the cytoplasm. The enzyme catalyses Endonucleolytic cleavage at apurinic or apyrimidinic sites to products with a 5'-phosphate.. DNA repair enzyme involved in the repair of deaminated bases. Selectively cleaves double-stranded DNA at the second phosphodiester bond 3' to a deoxyinosine leaving behind the intact lesion on the nicked DNA. The polypeptide is Endonuclease V (Xylella fastidiosa (strain Temecula1 / ATCC 700964)).